We begin with the raw amino-acid sequence, 556 residues long: Urocanate hydratase (556 aa).

NAD(+) is bound by residues Gly52 to Gly53, Gln130, Gly176 to Gly178, Glu196, Arg201, Asn242 to Ala243, Gln263 to His267, Tyr273 to Leu274, and Tyr322. Residue Cys410 is part of the active site. Gly492 serves as a coordination point for NAD(+).

The protein belongs to the urocanase family. The cofactor is NAD(+).

It is found in the cytoplasm. It catalyses the reaction 4-imidazolone-5-propanoate = trans-urocanate + H2O. It participates in amino-acid degradation; L-histidine degradation into L-glutamate; N-formimidoyl-L-glutamate from L-histidine: step 2/3. Its function is as follows. Catalyzes the conversion of urocanate to 4-imidazolone-5-propionate. The protein is Urocanate hydratase of Shewanella woodyi (strain ATCC 51908 / MS32).